Here is a 68-residue protein sequence, read N- to C-terminus: Large ribosomal subunit protein bL32 (68 aa).

This sequence belongs to the bacterial ribosomal protein bL32 family.

The polypeptide is Large ribosomal subunit protein bL32 (Ruegeria pomeroyi (strain ATCC 700808 / DSM 15171 / DSS-3) (Silicibacter pomeroyi)).